The sequence spans 94 residues: Large ribosomal subunit protein bL25 (94 aa).

Belongs to the bacterial ribosomal protein bL25 family. Part of the 50S ribosomal subunit; part of the 5S rRNA/L5/L18/L25 subcomplex. Contacts the 5S rRNA. Binds to the 5S rRNA independently of L5 and L18.

In terms of biological role, this is one of the proteins that binds to the 5S RNA in the ribosome where it forms part of the central protuberance. This is Large ribosomal subunit protein bL25 from Pectobacterium atrosepticum (strain SCRI 1043 / ATCC BAA-672) (Erwinia carotovora subsp. atroseptica).